A 102-amino-acid chain; its full sequence is UPF0213 protein Spro_0507 (102 aa).

The GIY-YIG domain maps to 6–81 (PTWHLYMLRM…KQLSKTQKER (76 aa)).

The protein belongs to the UPF0213 family.

The polypeptide is UPF0213 protein Spro_0507 (Serratia proteamaculans (strain 568)).